The chain runs to 1485 residues: Putative E3 ubiquitin-protein ligase LIN-1 (1485 aa).

Positions 337-353 are enriched in acidic residues; the sequence is EENEDDSDSELENESVD. Disordered stretches follow at residues 337–363 and 384–417; these read EENE…IFSP and NQIP…KRDS. The U-box domain occupies 510–585; the sequence is KPPKDFVCPI…TSWKEQNPEL (76 aa). WD repeat units lie at residues 1204–1241, 1246–1283, 1409–1448, and 1454–1485; these read SSNG…PRVI, EHTK…IKCI, SLST…RVAS, and GHTK…WALD.

In terms of tissue distribution, expressed in roots and nodules, and at very low levels in calli and seedling shoots.

It carries out the reaction S-ubiquitinyl-[E2 ubiquitin-conjugating enzyme]-L-cysteine + [acceptor protein]-L-lysine = [E2 ubiquitin-conjugating enzyme]-L-cysteine + N(6)-ubiquitinyl-[acceptor protein]-L-lysine.. It functions in the pathway protein modification; protein ubiquitination. Putative E3 ubiquitin-protein ligase involved in the rhizobial infection process. Plays an important role in the early steps of infection thread formation and in growth and differentiation of nodules. This chain is Putative E3 ubiquitin-protein ligase LIN-1, found in Lotus japonicus (Lotus corniculatus var. japonicus).